Reading from the N-terminus, the 552-residue chain is Steroid transmembrane transporter SLC22A24 (552 aa).

12 helical membrane passes run 16–36 (FQIL…PHML), 144–164 (LISV…LIFG), 178–198 (CCLL…TFPV), 204–224 (FLGG…MSEW), 235–255 (GIIL…GFVI), 267–287 (IPLF…QWLI), 350–370 (IFYL…LMLN), 378–398 (IFLF…AVLL), 407–427 (ISQM…IFLS), 435–455 (VALA…HTVH), 469–489 (IGLN…LMIL), and 496–516 (LPWI…LLLP). The segment at 524–552 (PNTIQDVENNRRDSRKTKQEDISMKVTQF) is disordered. Basic and acidic residues predominate over residues 531 to 546 (ENNRRDSRKTKQEDIS).

The protein belongs to the major facilitator (TC 2.A.1) superfamily. Organic cation transporter (TC 2.A.1.19) family.

The protein localises to the cell membrane. The catalysed reaction is estrone 3-sulfate(out) + glutarate(in) = estrone 3-sulfate(in) + glutarate(out). It carries out the reaction 17beta-estradiol 17-O-(beta-D-glucuronate)(out) + glutarate(in) = 17beta-estradiol 17-O-(beta-D-glucuronate)(in) + glutarate(out). The enzyme catalyses taurocholate(out) + glutarate(in) = taurocholate(in) + glutarate(out). It catalyses the reaction glycocholate(out) + glutarate(in) = glycocholate(in) + glutarate(out). The catalysed reaction is dehydroepiandrosterone 3-sulfate(out) + glutarate(in) = dehydroepiandrosterone 3-sulfate(in) + glutarate(out). It carries out the reaction glutarate(in) + succinate(out) = glutarate(out) + succinate(in). Functionally, renal transmembrane organic anion/dicarboxylate exchanger that participates in the reabsorption of conjugated steroids, as well as bile acids, driven by an outward gradient of dicarboxylates such as glutarate or succinate. Transports taurocholate, estrone 3-sulfate, and estradiol-17-glucuronide (17beta-estradiol 17-O-(beta-D-glucuronate)), but not androstanediol glucuronide (5alpha-androstane-3alpha,17beta-diol 3-O-(beta-D-glucuronate)). The chain is Steroid transmembrane transporter SLC22A24 from Equus caballus (Horse).